A 349-amino-acid chain; its full sequence is UDP-3-O-acylglucosamine N-acyltransferase (349 aa).

Histidine 246 acts as the Proton acceptor in catalysis.

Belongs to the transferase hexapeptide repeat family. LpxD subfamily. As to quaternary structure, homotrimer.

The catalysed reaction is a UDP-3-O-[(3R)-3-hydroxyacyl]-alpha-D-glucosamine + a (3R)-hydroxyacyl-[ACP] = a UDP-2-N,3-O-bis[(3R)-3-hydroxyacyl]-alpha-D-glucosamine + holo-[ACP] + H(+). The protein operates within bacterial outer membrane biogenesis; LPS lipid A biosynthesis. Its function is as follows. Catalyzes the N-acylation of UDP-3-O-acylglucosamine using 3-hydroxyacyl-ACP as the acyl donor. Is involved in the biosynthesis of lipid A, a phosphorylated glycolipid that anchors the lipopolysaccharide to the outer membrane of the cell. In Trichormus variabilis (strain ATCC 29413 / PCC 7937) (Anabaena variabilis), this protein is UDP-3-O-acylglucosamine N-acyltransferase.